A 150-amino-acid chain; its full sequence is MAVSPEAAAIIQRKKAQYCRFADSNQWDRFDSIMLPSATFLFHNPDGSVITKGDIEYSWSSTKDWVAFFENEFKTMQTIHILGPAEMGQIAPDEIKAIWAVTYHAGTKEHQGGVHGTGGGHYHETWKKVGDDWFMESLRMERLYWKLLSV.

The protein operates within secondary metabolite biosynthesis. Probable cyclase; part of the gene cluster that mediates the biosynthesis of the tetraketides fugralins such as linear fugralin A and cyclic fugralin B, volatile compounds that play a role in the asexual reproductive cycle but are not involved in pathogenicity. Fugralin B is similar to fugralin A except for a cyclization between the carboxylic acid C-8 and the alcohol on C-4 resulting in a six membered lactone ring, probably catalyzed by the cyclase FGR4. One of the key features of fugralins is the presence of a double methyl group, which is only rarely encountered in fungal secondary metabolites. As the fugralins cluster does not contain an independent methyltransferase, the PKS FGR1 is probably responsible for adding two methyl groups to the same carbon atom. The exact role of the individual cluster genes remains unknown and further work is needed to unravel the biosynthetic pathway. This chain is Probable cyclase FGR4, found in Gibberella zeae (strain ATCC MYA-4620 / CBS 123657 / FGSC 9075 / NRRL 31084 / PH-1) (Wheat head blight fungus).